The sequence spans 215 residues: Uracil phosphoribosyltransferase (215 aa).

Lys30–Arg34 is a GTP binding site. Residues Arg80, Arg105, and Asp139–Thr147 each bind 5-phospho-alpha-D-ribose 1-diphosphate. Residues Ile202 and Gly207–Ala209 contribute to the uracil site. Asp208 contacts 5-phospho-alpha-D-ribose 1-diphosphate.

Belongs to the UPRTase family. Mg(2+) serves as cofactor.

The enzyme catalyses UMP + diphosphate = 5-phospho-alpha-D-ribose 1-diphosphate + uracil. Its pathway is pyrimidine metabolism; UMP biosynthesis via salvage pathway; UMP from uracil: step 1/1. With respect to regulation, allosterically activated by GTP. Its function is as follows. Catalyzes the conversion of uracil and 5-phospho-alpha-D-ribose 1-diphosphate (PRPP) to UMP and diphosphate. This Metallosphaera sedula (strain ATCC 51363 / DSM 5348 / JCM 9185 / NBRC 15509 / TH2) protein is Uracil phosphoribosyltransferase.